The following is a 306-amino-acid chain: GTP-binding protein RAD (306 aa).

A compositionally biased stretch (gly residues) spans 1-13; the sequence is MTLNGGSGAGGSR. Residues 1–91 form a disordered region; the sequence is MTLNGGSGAG…GDSGSEDGVY (91 aa). Arginine 23 is modified (omega-N-methylarginine). Residue serine 25 is modified to Phosphoserine. Residues 56–88 show a composition bias toward low complexity; it reads AATAAGTRTQGQRLDWPEGSSDSLSSGDSGSED. GTP is bound by residues 97-104 and 201-204; these read GAPGVGKS and NKSD. The segment at 276–295 is calmodulin-binding; the sequence is AKLFLGRIVARNSRKMAFLA.

This sequence belongs to the small GTPase superfamily. RGK family. In terms of assembly, interacts with Calmodulin preferentially in the inactive, GDP-bound form. Interacts with CAMK2D. Interacts with CACNB2; interaction may be involved in beta-adrenergic regulation of heart rate and contractile force. Interaction with CACNB2 regulates the trafficking of CACNA1C to the cell membrane.

It is found in the cell membrane. Functionally, may regulate basal voltage-dependent L-type Ca(2+) currents and be required for beta-adrenergic augmentation of Ca(2+) influx in cardiomyocytes, thereby regulating increases in heart rate and contractile force. May play an important role in cardiac antiarrhythmia via the strong suppression of voltage-dependent L-type Ca(2+) currents. Regulates voltage-gated L-type calcium channel subunit alpha-1C trafficking to the cell membrane. Inhibits cardiac hypertrophy through the calmodulin-dependent kinase II (CaMKII) pathway. Inhibits phosphorylation and activation of CAMK2D. The sequence is that of GTP-binding protein RAD (Rrad) from Rattus norvegicus (Rat).